Here is a 230-residue protein sequence, read N- to C-terminus: ATP-dependent dethiobiotin synthetase BioD (230 aa).

12 to 17 (DIGKTH) serves as a coordination point for ATP. Residue Thr16 coordinates Mg(2+). Lys37 is a catalytic residue. Ser41 contributes to the substrate binding site. ATP is bound by residues Asp52, 115–118 (EGAG), and 175–176 (SE). Mg(2+)-binding residues include Asp52 and Glu115.

Belongs to the dethiobiotin synthetase family. In terms of assembly, homodimer. The cofactor is Mg(2+).

It is found in the cytoplasm. The enzyme catalyses (7R,8S)-7,8-diammoniononanoate + CO2 + ATP = (4R,5S)-dethiobiotin + ADP + phosphate + 3 H(+). It functions in the pathway cofactor biosynthesis; biotin biosynthesis; biotin from 7,8-diaminononanoate: step 1/2. Functionally, catalyzes a mechanistically unusual reaction, the ATP-dependent insertion of CO2 between the N7 and N8 nitrogen atoms of 7,8-diaminopelargonic acid (DAPA, also called 7,8-diammoniononanoate) to form a ureido ring. This is ATP-dependent dethiobiotin synthetase BioD from Caulobacter sp. (strain K31).